The sequence spans 105 residues: Sulfite reductase, dissimilatory-type subunit gamma (105 aa).

It belongs to the DsrC/TusE family. Heterohexamer of two alpha, two beta and two gamma subunits.

The protein resides in the cytoplasm. It catalyses the reaction [DsrC protein]-trisulfide + NAD(+) + 3 H2O = [DsrC protein]-dithiol + sulfite + NADH + 3 H(+). In terms of biological role, catalyzes the reduction of sulfite to sulfide. This is the terminal oxidation reaction in sulfate respiration, a process catalyzed by the sulfate-reducing bacteria. This chain is Sulfite reductase, dissimilatory-type subunit gamma (dsvC), found in Nitratidesulfovibrio vulgaris (strain ATCC 29579 / DSM 644 / CCUG 34227 / NCIMB 8303 / VKM B-1760 / Hildenborough) (Desulfovibrio vulgaris).